The primary structure comprises 156 residues: Small ribosomal subunit protein uS7 (156 aa).

Belongs to the universal ribosomal protein uS7 family. In terms of assembly, part of the 30S ribosomal subunit. Contacts proteins S9 and S11.

Its function is as follows. One of the primary rRNA binding proteins, it binds directly to 16S rRNA where it nucleates assembly of the head domain of the 30S subunit. Is located at the subunit interface close to the decoding center, probably blocks exit of the E-site tRNA. This Streptococcus equi subsp. equi (strain 4047) protein is Small ribosomal subunit protein uS7.